Here is a 135-residue protein sequence, read N- to C-terminus: Small ribosomal subunit protein bS16 (135 aa).

The interval 106–135 is disordered; the sequence is TERRQKRLVVKSRRRQAKKEAEGKAAGAEA. The segment covering 109 to 122 has biased composition (basic residues); it reads RQKRLVVKSRRRQA.

Belongs to the bacterial ribosomal protein bS16 family.

This is Small ribosomal subunit protein bS16 from Chlorobium phaeobacteroides (strain DSM 266 / SMG 266 / 2430).